The sequence spans 719 residues: MKLKNPDKHQSLSSNAKVDKIATDSLKNETDIELKNMNNEDYLRMSEHESIDPFVSASTIQTGIGIAGKILGTLGVPFAGQIASLYSFILGELWPKGKSQWEIFMEHVEEIINQKILTYARNKALSDLRGLGDALAVYHESLESWVENRNNTRARSVVKNQYIALELMFVQKLPSFAVSGEEVPLLPIYAQAANLHLLLLRDASIFGKEWGLSASEISTFYNRQVERTRDYSDHCIKWYNTGLNNLRGTNAKSWVRYNQFRKDMTLMVLDLVALFPSYDTLVYPIKTTSQLTREVYTDAIGTVHPNQAFASTTWYNNNAPSFSAIEAAVIRSPHLLDFLEKVTIYSLLSRWSNTQYMNMWGGHRLESRPIGGALNTSTQGSTNTSINPVTLQFTSRDVYRTESLAGLNLFLTQPVNGVPRVDFHWKFPTLPIASDNFYYLGYAGVGTQLQDSENELPPETTGQPNYESYSHRLSHIGLISASHVKALVYSWTHRSADRTNTIEPNSITQIPLVKAFNLSSGAAVVRGPGFTGGDILRRTNTGTFGDIRVNINPPFAQRYRVRIRYASTTDLQFHTSINGKAINQGNFSATMNRGEDLDYKTFRTIGFTTPFSFSDVQSTFTIGAWNFSSGNEVYIDRIEFVPVEVTYEAEYDFEKAQEKVTALFTSTNPRGLKTDVKDYHIDQVSNLVESLSDEFYLDEKRELFEIVKYAKQIHIERNM.

This sequence belongs to the delta endotoxin family.

Promotes colloidosmotic lysis by binding to the midgut epithelial cells of certain coleopteran and lepidopteran species. Active on Plutella xylostella but not on Bombyx mori. The chain is Pesticidal crystal protein Cry1Ib (cry1Ib) from Bacillus thuringiensis subsp. entomocidus.